Reading from the N-terminus, the 325-residue chain is Beta-ketoacyl-[acyl-carrier-protein] synthase III (325 aa).

Catalysis depends on residues Cys-116 and His-252. An ACP-binding region spans residues 253-257 (QANLR). Asn-282 is a catalytic residue.

Belongs to the thiolase-like superfamily. FabH family. In terms of assembly, homodimer.

The protein resides in the cytoplasm. The enzyme catalyses malonyl-[ACP] + acetyl-CoA + H(+) = 3-oxobutanoyl-[ACP] + CO2 + CoA. It functions in the pathway lipid metabolism; fatty acid biosynthesis. Its function is as follows. Catalyzes the condensation reaction of fatty acid synthesis by the addition to an acyl acceptor of two carbons from malonyl-ACP. Catalyzes the first condensation reaction which initiates fatty acid synthesis and may therefore play a role in governing the total rate of fatty acid production. Possesses both acetoacetyl-ACP synthase and acetyl transacylase activities. Its substrate specificity determines the biosynthesis of branched-chain and/or straight-chain of fatty acids. The protein is Beta-ketoacyl-[acyl-carrier-protein] synthase III of Xanthomonas euvesicatoria pv. vesicatoria (strain 85-10) (Xanthomonas campestris pv. vesicatoria).